Consider the following 511-residue polypeptide: Ribosome biogenesis protein YTM1 (511 aa).

Residues 9–112 (VKVVFVTRDE…EVSLSIEYIR (104 aa)) form a ubiquitin-like (UBL) domain region. The sufficient for interaction with ERB1 and association with 66S pre-ribosomes stretch occupies residues 122–511 (SFSNPDWVAA…IQINNNPQSA (390 aa)). WD repeat units follow at residues 124 to 168 (SNPD…TGQL), 170 to 208 (GHNS…YRRK), 248 to 287 (GHTA…MPAI), 332 to 372 (GHSA…AVQS), 383 to 423 (TRST…QVAT), 429 to 470 (GHTN…SLHV), and 477 to 511 (TENN…PQSA). A disordered region spans residues 207-228 (RKEPGQVGKKELNYDSEEDSDE). Positions 208–219 (KEPGQVGKKELN) are enriched in basic and acidic residues.

The protein belongs to the WD repeat WDR12/YTM1 family. In terms of assembly, component of the NOP7 complex, composed of ERB1, NOP7 and YTM1. The complex is held together by ERB1, which interacts with NOP7 via its N-terminal domain and with YTM1 via a high-affinity interaction between the seven-bladed beta-propeller domains of the 2 proteins. The NOP7 complex associates with the 66S pre-ribosome. Interacts (via UBL domain) with MDN1 (via VWFA/MIDAS domain).

It localises to the nucleus. Its subcellular location is the nucleolus. It is found in the nucleoplasm. Component of the NOP7 complex, which is required for maturation of the 25S and 5.8S ribosomal RNAs and formation of the 60S ribosome. This Yarrowia lipolytica (strain CLIB 122 / E 150) (Yeast) protein is Ribosome biogenesis protein YTM1.